The following is a 498-amino-acid chain: ATP synthase subunit beta, chloroplastic (498 aa).

Residue 172-179 participates in ATP binding; sequence GGAGVGKT.

It belongs to the ATPase alpha/beta chains family. F-type ATPases have 2 components, CF(1) - the catalytic core - and CF(0) - the membrane proton channel. CF(1) has five subunits: alpha(3), beta(3), gamma(1), delta(1), epsilon(1). CF(0) has four main subunits: a(1), b(1), b'(1) and c(9-12).

The protein localises to the plastid. It is found in the chloroplast thylakoid membrane. The catalysed reaction is ATP + H2O + 4 H(+)(in) = ADP + phosphate + 5 H(+)(out). In terms of biological role, produces ATP from ADP in the presence of a proton gradient across the membrane. The catalytic sites are hosted primarily by the beta subunits. This chain is ATP synthase subunit beta, chloroplastic, found in Balaka seemannii.